A 604-amino-acid polypeptide reads, in one-letter code: Beta-(1--&gt;2)glucan export ATP-binding/permease protein NdvA (604 aa).

The ABC transmembrane type-1 domain occupies G21–M311. 6 helical membrane-spanning segments follow: residues W22–F42, L68–L88, E146–W166, L168–H188, L238–A258, and I285–F305. An ABC transporter domain is found at V345–A579. An ATP-binding site is contributed by G378 to S385.

Belongs to the ABC transporter superfamily. Beta-(1--&gt;2)glucan exporter (TC 3.A.1.108.1) family. As to quaternary structure, homodimer.

The protein localises to the cell inner membrane. The enzyme catalyses [(1-&gt;2)-beta-D-glucosyl](n)(in) + ATP + H2O = [(1-&gt;2)-beta-D-glucosyl](n)(out) + ADP + phosphate + H(+). Its function is as follows. Involved in beta-(1--&gt;2)glucan export. Transmembrane domains (TMD) form a pore in the inner membrane and the ATP-binding domain (NBD) is responsible for energy generation. The polypeptide is Beta-(1--&gt;2)glucan export ATP-binding/permease protein NdvA (Rhodopseudomonas palustris (strain BisB18)).